Consider the following 500-residue polypeptide: Chromosomal replication initiator protein DnaA (500 aa).

The segment at methionine 1 to threonine 37 is disordered. The tract at residues methionine 1–lysine 103 is domain I, interacts with DnaA modulators. Residues proline 14–methionine 27 are compositionally biased toward pro residues. The tract at residues lysine 103–asparagine 161 is domain II. Residues arginine 162–alanine 378 form a domain III, AAA+ region region. Glycine 206, glycine 208, lysine 209, and threonine 210 together coordinate ATP. Residues serine 379–tyrosine 500 are domain IV, binds dsDNA.

The protein belongs to the DnaA family. As to quaternary structure, oligomerizes as a right-handed, spiral filament on DNA at oriC.

It is found in the cytoplasm. In terms of biological role, plays an essential role in the initiation and regulation of chromosomal replication. ATP-DnaA binds to the origin of replication (oriC) to initiate formation of the DNA replication initiation complex once per cell cycle. Binds the DnaA box (a 9 base pair repeat at the origin) and separates the double-stranded (ds)DNA. Forms a right-handed helical filament on oriC DNA; dsDNA binds to the exterior of the filament while single-stranded (ss)DNA is stabiized in the filament's interior. The ATP-DnaA-oriC complex binds and stabilizes one strand of the AT-rich DNA unwinding element (DUE), permitting loading of DNA polymerase. After initiation quickly degrades to an ADP-DnaA complex that is not apt for DNA replication. Binds acidic phospholipids. The sequence is that of Chromosomal replication initiator protein DnaA from Cutibacterium acnes (strain DSM 16379 / KPA171202) (Propionibacterium acnes).